Reading from the N-terminus, the 944-residue chain is Isoleucine--tRNA ligase (944 aa).

Positions 58 to 68 (PYANGSIHIGH) match the 'HIGH' region motif. E563 is a binding site for L-isoleucyl-5'-AMP. The 'KMSKS' region motif lies at 604–608 (KMSKS). K607 contacts ATP. Zn(2+) contacts are provided by C907, C910, C927, and C930.

Belongs to the class-I aminoacyl-tRNA synthetase family. IleS type 1 subfamily. Monomer. Requires Zn(2+) as cofactor.

It is found in the cytoplasm. The enzyme catalyses tRNA(Ile) + L-isoleucine + ATP = L-isoleucyl-tRNA(Ile) + AMP + diphosphate. Functionally, catalyzes the attachment of isoleucine to tRNA(Ile). As IleRS can inadvertently accommodate and process structurally similar amino acids such as valine, to avoid such errors it has two additional distinct tRNA(Ile)-dependent editing activities. One activity is designated as 'pretransfer' editing and involves the hydrolysis of activated Val-AMP. The other activity is designated 'posttransfer' editing and involves deacylation of mischarged Val-tRNA(Ile). In Salmonella typhi, this protein is Isoleucine--tRNA ligase.